The primary structure comprises 130 residues: Small ribosomal subunit protein uS9 (130 aa).

It belongs to the universal ribosomal protein uS9 family.

The sequence is that of Small ribosomal subunit protein uS9 from Exiguobacterium sp. (strain ATCC BAA-1283 / AT1b).